We begin with the raw amino-acid sequence, 139 residues long: MMNINEIKEILPHRYPFLLVDKVEEITESKVVAYKNVTINEPFFQGHFPDYPVMPGVLIVEALAQAGAIALLNKEEFKGKTPFFAGIDKVRFKKQVLPGDTLRLEVEIIKLRGSIGFGKATATVDGKIACSGEIMFAIG.

The active site involves histidine 47.

The protein belongs to the thioester dehydratase family. FabZ subfamily.

Its subcellular location is the cytoplasm. It carries out the reaction a (3R)-hydroxyacyl-[ACP] = a (2E)-enoyl-[ACP] + H2O. Functionally, involved in unsaturated fatty acids biosynthesis. Catalyzes the dehydration of short chain beta-hydroxyacyl-ACPs and long chain saturated and unsaturated beta-hydroxyacyl-ACPs. The sequence is that of 3-hydroxyacyl-[acyl-carrier-protein] dehydratase FabZ from Clostridium perfringens (strain ATCC 13124 / DSM 756 / JCM 1290 / NCIMB 6125 / NCTC 8237 / Type A).